A 145-amino-acid chain; its full sequence is Large ribosomal subunit protein uL16 (145 aa).

This sequence belongs to the universal ribosomal protein uL16 family. In terms of assembly, part of the 50S ribosomal subunit.

Its function is as follows. Binds 23S rRNA and is also seen to make contacts with the A and possibly P site tRNAs. The polypeptide is Large ribosomal subunit protein uL16 (Lachnospira eligens (strain ATCC 27750 / DSM 3376 / VPI C15-48 / C15-B4) (Eubacterium eligens)).